The primary structure comprises 195 residues: Probable peroxygenase 4 (195 aa).

The region spanning 14 to 49 (EEDNFLQRHVAFFDRNKDGIVYPSETFQGFRAIGCG) is the EF-hand domain. His22 contacts heme. Asp27, Asn29, Asp31, and Glu38 together coordinate Ca(2+). The Proline-knot motif lies at 70 to 79 (PGKGFSIWFP). At Ser177 the chain carries Phosphoserine.

The protein belongs to the caleosin family. As to quaternary structure, homodimer. Heme b is required as a cofactor. Ca(2+) serves as cofactor. Expressed in roots, leaves, stems, shoots, flowers and germinated seeds. Barely detected in dry seeds prior to germination. Preferentially expressed in vascular bundles and in guard cells.

It is found in the lipid droplet. It carries out the reaction RH + ROOH = ROH + ROH.. In terms of biological role, calcium-binding peroxygenase involved in the degradation of storage lipid in oil bodies. May be involved in the interaction between oil bodies and vacuoles during seed germination. Acts as a negative regulator of abscisic acid responses in non-seed tissues. The sequence is that of Probable peroxygenase 4 (PXG4) from Arabidopsis thaliana (Mouse-ear cress).